The following is a 177-amino-acid chain: Phycoerythrin beta subunit (177 aa).

(2R,3E)-phycoerythrobilin is bound by residues tyrosine 18, lysine 28, asparagine 35, and aspartate 39. Residues cysteine 50, aspartate 54, and cysteine 61 each contribute to the 15,16-dihydrobiliverdin site. Residues cysteine 82, arginine 84, and aspartate 85 each contribute to the (2R,3E)-phycoerythrobilin site. A 15,16-dihydrobiliverdin-binding site is contributed by arginine 129. Asparagine 144 lines the (2R,3E)-phycoerythrobilin pocket. 15,16-dihydrobiliverdin-binding residues include glutamine 148 and lysine 149. Proline 154, glycine 156, and cysteine 158 together coordinate (2R,3E)-phycoerythrobilin.

The protein belongs to the phycobiliprotein family. As to quaternary structure, heterotetramer of 2 different alpha chains and 2 identical beta chains which form 2 alpha-beta heterodimers within the heterotetramer. The two alpha-beta heterodimers are rotated to an open configuration in contrast to the closed configuration found in other cryptophyte species due to the insertion of a single amino acid, 'Asp-65', in a conserved region of the alpha chain. In the open form, the central chromophores are not in physical contact but are separated by a water-filled channel. Contains three phycoerythrobilin chromophores and one 15,16-dihydrobiliverdin chromophore with binding of the phycoerythrobilin chromophores mediated by both the alpha and beta subunits.

It is found in the plastid. It localises to the chloroplast thylakoid membrane. Functionally, light-harvesting photosynthetic bile pigment-protein from the phycobiliprotein complex. The sequence is that of Phycoerythrin beta subunit from Hemiselmis andersenii (Cryptophyte alga).